Consider the following 348-residue polypeptide: Dihydroorotase (348 aa).

Positions 14 and 16 each coordinate Zn(2+). Substrate-binding positions include 16–18 (HLR) and Asn42. Positions 100, 137, and 175 each coordinate Zn(2+). N6-carboxylysine is present on Lys100. His137 contributes to the substrate binding site. Position 220 (Leu220) interacts with substrate. Asp248 is a binding site for Zn(2+). Residue Asp248 is part of the active site. The substrate site is built by His252 and Ala264.

It belongs to the metallo-dependent hydrolases superfamily. DHOase family. Class II DHOase subfamily. As to quaternary structure, homodimer. Requires Zn(2+) as cofactor.

It carries out the reaction (S)-dihydroorotate + H2O = N-carbamoyl-L-aspartate + H(+). The protein operates within pyrimidine metabolism; UMP biosynthesis via de novo pathway; (S)-dihydroorotate from bicarbonate: step 3/3. In terms of biological role, catalyzes the reversible cyclization of carbamoyl aspartate to dihydroorotate. In Pseudomonas aeruginosa (strain ATCC 15692 / DSM 22644 / CIP 104116 / JCM 14847 / LMG 12228 / 1C / PRS 101 / PAO1), this protein is Dihydroorotase.